The sequence spans 117 residues: MVQRLTYRRRLSYNTASNKTRLSRTPGNRIVYLYTKKVGKAPKSACGVLPGRLRGVVAVRPKVLMRLSKTKKHVQQGLWWLHVRQVCPDRIKRAFLIEEQKIVVKVLKAQAQSQKAK.

Residue S12 is modified to Phosphoserine. N6-acetyllysine is present on residues K36 and K43. Residue K108 forms a Glycyl lysine isopeptide (Lys-Gly) (interchain with G-Cter in SUMO2) linkage.

Belongs to the eukaryotic ribosomal protein eL34 family. Component of the large ribosomal subunit.

It is found in the cytoplasm. The protein localises to the cytosol. It localises to the endoplasmic reticulum. Component of the large ribosomal subunit. The ribosome is a large ribonucleoprotein complex responsible for the synthesis of proteins in the cell. The chain is Large ribosomal subunit protein eL34 (Rpl34) from Rattus norvegicus (Rat).